The primary structure comprises 141 residues: Nucleoside diphosphate kinase (141 aa).

Residues Lys11, Phe59, Arg87, Thr93, Arg104, and Asn114 each contribute to the ATP site. Residue His117 is the Pros-phosphohistidine intermediate of the active site.

This sequence belongs to the NDK family. Homotetramer. The cofactor is Mg(2+).

The protein resides in the cytoplasm. The enzyme catalyses a 2'-deoxyribonucleoside 5'-diphosphate + ATP = a 2'-deoxyribonucleoside 5'-triphosphate + ADP. It catalyses the reaction a ribonucleoside 5'-diphosphate + ATP = a ribonucleoside 5'-triphosphate + ADP. Its function is as follows. Major role in the synthesis of nucleoside triphosphates other than ATP. The ATP gamma phosphate is transferred to the NDP beta phosphate via a ping-pong mechanism, using a phosphorylated active-site intermediate. The protein is Nucleoside diphosphate kinase of Bordetella bronchiseptica (strain ATCC BAA-588 / NCTC 13252 / RB50) (Alcaligenes bronchisepticus).